The sequence spans 193 residues: dCTP deaminase (193 aa).

Residues 110 to 115 (RSSLAR), aspartate 128, 136 to 138 (VLE), tyrosine 171, lysine 178, and glutamine 182 contribute to the dCTP site. Glutamate 138 functions as the Proton donor/acceptor in the catalytic mechanism.

The protein belongs to the dCTP deaminase family. In terms of assembly, homotrimer.

It catalyses the reaction dCTP + H2O + H(+) = dUTP + NH4(+). The protein operates within pyrimidine metabolism; dUMP biosynthesis; dUMP from dCTP (dUTP route): step 1/2. Catalyzes the deamination of dCTP to dUTP. The chain is dCTP deaminase from Tolumonas auensis (strain DSM 9187 / NBRC 110442 / TA 4).